The primary structure comprises 192 residues: Thymidine kinase (192 aa).

Residues 9–16 and 87–90 each bind ATP; these read SAMNAGKS and DECQ. The active-site Proton acceptor is Glu88. The Zn(2+) site is built by Cys145, Cys147, Cys182, and His185.

It belongs to the thymidine kinase family. As to quaternary structure, homotetramer.

Its subcellular location is the cytoplasm. The enzyme catalyses thymidine + ATP = dTMP + ADP + H(+). In Vibrio cholerae serotype O1 (strain ATCC 39315 / El Tor Inaba N16961), this protein is Thymidine kinase.